The primary structure comprises 293 residues: Large ribosomal subunit protein uL4 (293 aa).

Composition is skewed to basic and acidic residues over residues 1–14 and 33–55; these read MAEE…EKTP and KTTE…ESTK. Disordered regions lie at residues 1-72 and 130-166; these read MAEE…IKSE and QRQG…STRS.

It belongs to the universal ribosomal protein uL4 family. Part of the 50S ribosomal subunit.

Its function is as follows. One of the primary rRNA binding proteins, this protein initially binds near the 5'-end of the 23S rRNA. It is important during the early stages of 50S assembly. It makes multiple contacts with different domains of the 23S rRNA in the assembled 50S subunit and ribosome. Functionally, forms part of the polypeptide exit tunnel. The polypeptide is Large ribosomal subunit protein uL4 (Mycoplasma mobile (strain ATCC 43663 / 163K / NCTC 11711) (Mesomycoplasma mobile)).